The chain runs to 90 residues: Movement protein (90 aa).

The helical transmembrane segment at 32-52 (FVFVTFGLLIAVGVAWLAYTL) threads the bilayer.

This sequence belongs to the mastrevirus movement protein family. As to quaternary structure, interacts with the capsid protein (CP). Part of a MP-CP-viral DNA complex.

It localises to the host membrane. Its function is as follows. Involved in the viral transport within, and between cells. The sequence is that of Movement protein from Wheat dwarf virus (isolate Sweden) (WDV).